The following is an 86-amino-acid chain: RNA-binding protein Hfq (86 aa).

Positions 12-73 (DIFLNQVRKE…ISTISPQKPV (62 aa)) constitute a Sm domain.

It belongs to the Hfq family. In terms of assembly, homohexamer.

RNA chaperone that binds small regulatory RNA (sRNAs) and mRNAs to facilitate mRNA translational regulation in response to envelope stress, environmental stress and changes in metabolite concentrations. Also binds with high specificity to tRNAs. The sequence is that of RNA-binding protein Hfq from Caldanaerobacter subterraneus subsp. tengcongensis (strain DSM 15242 / JCM 11007 / NBRC 100824 / MB4) (Thermoanaerobacter tengcongensis).